A 360-amino-acid chain; its full sequence is Phosphoserine aminotransferase (360 aa).

Arg-41 serves as a coordination point for L-glutamate. 4 residues coordinate pyridoxal 5'-phosphate: Trp-101, Thr-152, Asp-172, and Gln-195. N6-(pyridoxal phosphate)lysine is present on Lys-196. Position 237–238 (237–238 (NT)) interacts with pyridoxal 5'-phosphate.

It belongs to the class-V pyridoxal-phosphate-dependent aminotransferase family. SerC subfamily. In terms of assembly, homodimer. It depends on pyridoxal 5'-phosphate as a cofactor.

It localises to the cytoplasm. The catalysed reaction is O-phospho-L-serine + 2-oxoglutarate = 3-phosphooxypyruvate + L-glutamate. It carries out the reaction 4-(phosphooxy)-L-threonine + 2-oxoglutarate = (R)-3-hydroxy-2-oxo-4-phosphooxybutanoate + L-glutamate. Its pathway is amino-acid biosynthesis; L-serine biosynthesis; L-serine from 3-phospho-D-glycerate: step 2/3. It functions in the pathway cofactor biosynthesis; pyridoxine 5'-phosphate biosynthesis; pyridoxine 5'-phosphate from D-erythrose 4-phosphate: step 3/5. In terms of biological role, catalyzes the reversible conversion of 3-phosphohydroxypyruvate to phosphoserine and of 3-hydroxy-2-oxo-4-phosphonooxybutanoate to phosphohydroxythreonine. The protein is Phosphoserine aminotransferase of Burkholderia multivorans (strain ATCC 17616 / 249).